The sequence spans 495 residues: Ectonucleoside triphosphate diphosphohydrolase 2 (495 aa).

At 1–4 (MAGK) the chain is on the cytoplasmic side. A helical membrane pass occupies residues 5 to 25 (LVSLVPPLLLAAVGLAGLLLL). Topologically, residues 26–462 (CVPTQDVREP…PGLRKGTHFS (437 aa)) are extracellular. N-linked (GlcNAc...) asparagine glycosylation is present at Asn64. Cys75 and Cys99 form a disulfide bridge. N-linked (GlcNAc...) asparagine glycosylation is present at Asn129. Glu165 serves as the catalytic Proton acceptor. 204 to 208 (GASTQ) contributes to the ATP binding site. Cystine bridges form between Cys242/Cys284 and Cys265/Cys310. N-linked (GlcNAc...) asparagine glycosylation is found at Asn294 and Asn319. Cystine bridges form between Cys323-Cys328 and Cys377-Cys399. N-linked (GlcNAc...) asparagine glycosylation is found at Asn378 and Asn443. Residues 463–483 (SWVALLLLFTVLILAALVLLL) traverse the membrane as a helical segment. Residues 484-495 (RQVRSAKSPGAL) are Cytoplasmic-facing.

The protein belongs to the GDA1/CD39 NTPase family. Ca(2+) serves as cofactor. Mg(2+) is required as a cofactor.

It localises to the cell membrane. Its function is as follows. In the nervous system, could hydrolyze ATP and other nucleotides to regulate purinergic neurotransmission. Hydrolyzes ADP only to a marginal extent. The protein is Ectonucleoside triphosphate diphosphohydrolase 2 (Entpd2) of Mus musculus (Mouse).